Reading from the N-terminus, the 253-residue chain is Probable proteasome subunit alpha type-7 (253 aa).

Ser104 is modified (phosphoserine).

Belongs to the peptidase T1A family. The 26S proteasome consists of a 20S proteasome core and two 19S regulatory subunits. The 20S proteasome core is composed of 28 subunits that are arranged in four stacked rings, resulting in a barrel-shaped structure. The two end rings are each formed by seven alpha subunits, and the two central rings are each formed by seven beta subunits. The catalytic chamber with the active sites is on the inside of the barrel.

It is found in the cytoplasm. The protein localises to the nucleus. In terms of biological role, the proteasome is a multicatalytic proteinase complex which is characterized by its ability to cleave peptides with Arg, Phe, Tyr, Leu, and Glu adjacent to the leaving group at neutral or slightly basic pH. The proteasome has an ATP-dependent proteolytic activity. This is Probable proteasome subunit alpha type-7 (pre10) from Schizosaccharomyces pombe (strain 972 / ATCC 24843) (Fission yeast).